Reading from the N-terminus, the 302-residue chain is MAAKELSHLQQLEAESIQIIREVAAEFDNPVMMYSIGKDSSVMLHLARKAFYPGKIPFPLLHVDTDWKFKEMIAFRDEQAKEFGFELLVHKNPEGLEMGISPFEHGSAKHTDIMKTQGLKQALNKYGFDAAFGGARRDEEKSRAKERVYSFRDKHHTWDPKNQRPELWRTYNGAVNKGESIRVFPLSNWTELDIWQYIYQENIQLVPLYFAQKRPVVERDGMMIMVDDDRMPLAEGEQPKEELVRFRTLGCYPLTGAMHSEADTLEKIIEEMLLTRSSERQGRLIDSDQSASMELKKRQGYF.

The protein belongs to the PAPS reductase family. CysD subfamily. As to quaternary structure, heterodimer composed of CysD, the smaller subunit, and CysN.

The catalysed reaction is sulfate + ATP + H(+) = adenosine 5'-phosphosulfate + diphosphate. It functions in the pathway sulfur metabolism; hydrogen sulfide biosynthesis; sulfite from sulfate: step 1/3. Its function is as follows. With CysN forms the ATP sulfurylase (ATPS) that catalyzes the adenylation of sulfate producing adenosine 5'-phosphosulfate (APS) and diphosphate, the first enzymatic step in sulfur assimilation pathway. APS synthesis involves the formation of a high-energy phosphoric-sulfuric acid anhydride bond driven by GTP hydrolysis by CysN coupled to ATP hydrolysis by CysD. This chain is Sulfate adenylyltransferase subunit 2, found in Shewanella pealeana (strain ATCC 700345 / ANG-SQ1).